Consider the following 273-residue polypeptide: Large ribosomal subunit protein uL2 (273 aa).

A disordered region spans residues 228–273; it reads IDHPHGGGEGKTSGGRHPVTPWGFSTKGKKTRKNKRTSKFIVKKRK. Residues 254–273 show a composition bias toward basic residues; the sequence is KGKKTRKNKRTSKFIVKKRK.

The protein belongs to the universal ribosomal protein uL2 family. As to quaternary structure, part of the 50S ribosomal subunit. Forms a bridge to the 30S subunit in the 70S ribosome.

Its function is as follows. One of the primary rRNA binding proteins. Required for association of the 30S and 50S subunits to form the 70S ribosome, for tRNA binding and peptide bond formation. It has been suggested to have peptidyltransferase activity; this is somewhat controversial. Makes several contacts with the 16S rRNA in the 70S ribosome. In Rickettsia typhi (strain ATCC VR-144 / Wilmington), this protein is Large ribosomal subunit protein uL2.